The chain runs to 149 residues: Internal scaffolding protein ORF3 (149 aa).

It belongs to the microvidae B protein family.

The protein localises to the host cytoplasm. Functionally, participates in the assembly of the viral procapsid in the cytoplasm. Released from the procapsid upon genome packaging, possibly through affinity displacement by the protein ORF8, or by proteolysis. This chain is Internal scaffolding protein ORF3, found in Spiroplasma virus 4 (SpV4).